The primary structure comprises 472 residues: 3-isopropylmalate dehydratase large subunit (472 aa).

Residues C353, C414, and C417 each coordinate [4Fe-4S] cluster.

This sequence belongs to the aconitase/IPM isomerase family. LeuC type 1 subfamily. In terms of assembly, heterodimer of LeuC and LeuD. [4Fe-4S] cluster is required as a cofactor.

It carries out the reaction (2R,3S)-3-isopropylmalate = (2S)-2-isopropylmalate. It functions in the pathway amino-acid biosynthesis; L-leucine biosynthesis; L-leucine from 3-methyl-2-oxobutanoate: step 2/4. Functionally, catalyzes the isomerization between 2-isopropylmalate and 3-isopropylmalate, via the formation of 2-isopropylmaleate. The sequence is that of 3-isopropylmalate dehydratase large subunit from Acinetobacter baumannii (strain AB0057).